A 119-amino-acid chain; its full sequence is Non-specific lipid-transfer protein 12 (119 aa).

The first 24 residues, 1–24, serve as a signal peptide directing secretion; the sequence is MAFTPKIITCLIVLTIYMASPTES. 4 cysteine pairs are disulfide-bonded: Cys-28–Cys-75, Cys-38–Cys-52, Cys-53–Cys-98, and Cys-73–Cys-112.

This sequence belongs to the plant LTP family.

Functionally, plant non-specific lipid-transfer proteins transfer phospholipids as well as galactolipids across membranes. May play a role in wax or cutin deposition in the cell walls of expanding epidermal cells and certain secretory tissues. This chain is Non-specific lipid-transfer protein 12 (LTP12), found in Arabidopsis thaliana (Mouse-ear cress).